The sequence spans 1627 residues: Pappalysin-1 (1627 aa).

The N-terminal stretch at M1–A22 is a signal peptide. A propeptide spanning residues E23–R81 is cleaved from the precursor. The interval E23–F99 is disordered. Low complexity predominate over residues A42 to A51. 17 cysteine pairs are disulfide-bonded: C144/C235, C327/C622, C332/C657, C414/C428, C424/C440, C457/C473, C474/C485, C583/C600, C587/C612, C710/C878, C713/C881, C753/C835, C775/C781, C947/C975, C960/C971, C983/C990, and C999/C1011. The interval M272 to C583 is metalloprotease. Residues N390 and N402 are each glycosylated (N-linked (GlcNAc...) asparagine). N429 is a glycosylation site (N-linked (GlcNAc...) asparagine). The N-linked (GlcNAc...) asparagine glycan is linked to N480. Residue H562 participates in Zn(2+) binding. Residue E563 is part of the active site. Residues H566 and H572 each contribute to the Zn(2+) site. N601, N619, and N725 each carry an N-linked (GlcNAc...) asparagine glycan. The segment at S733–K754 is disordered. Residues S739–Q751 are compositionally biased toward basic and acidic residues. An N-linked (GlcNAc...) asparagine glycan is attached at N825. N-linked (GlcNAc...) asparagine glycosylation occurs at N1026. Cystine bridges form between C1036/C1070, C1051/C1139, C1192/C1205, C1215/C1269, C1227/C1238, C1242/C1280, C1285/C1329, C1300/C1310, C1314/C1342, C1346/C1399, C1362/C1373, C1377/C1410, C1415/C1458, C1428/C1438, C1442/C1471, C1478/C1539, C1492/C1502, C1506/C1554, and C1558/C1576. Sushi domains are found at residues T1213–P1282, V1283–L1344, M1345–P1412, V1413–E1473, and G1476–K1556. N1222 and N1226 each carry an N-linked (GlcNAc...) asparagine glycan. Residue N1323 is glycosylated (N-linked (GlcNAc...) asparagine). An N-linked (GlcNAc...) asparagine glycan is attached at N1465. A glycan (N-linked (GlcNAc...) asparagine) is linked at N1519.

It belongs to the peptidase M43B family. As to quaternary structure, homodimer; disulfide-linked. In pregnancy serum, predominantly found as a disulfide-linked 2:2 heterotetramer with the proform of PRG2. Zn(2+) is required as a cofactor. Post-translationally, there appear to be no free sulfhydryl groups. As to expression, high levels in placenta and pregnancy serum. In placenta, expressed in X cells in septa and anchoring villi, and in syncytiotrophoblasts in the chorionic villi. Lower levels are found in a variety of other tissues including kidney, myometrium, endometrium, ovaries, breast, prostate, bone marrow, colon, fibroblasts and osteoblasts.

The protein resides in the secreted. The enzyme catalyses Cleavage of the 135-Met-|-Lys-136 bond in insulin-like growth factor binding protein (IGFBP)-4, and the 143-Ser-|-Lys-144 bond in IGFBP-5.. Its activity is regulated as follows. Inhibited by complexation with the proform of PRG2. Metalloproteinase which specifically cleaves IGFBP-4 and IGFBP-5, resulting in release of bound IGF. Cleavage of IGFBP-4 is dramatically enhanced by the presence of IGF, whereas cleavage of IGFBP-5 is slightly inhibited by the presence of IGF. This is Pappalysin-1 (PAPPA) from Homo sapiens (Human).